Consider the following 891-residue polypeptide: Alanine--tRNA ligase (891 aa).

Zn(2+)-binding residues include H564, H568, C677, and H681.

Belongs to the class-II aminoacyl-tRNA synthetase family. It depends on Zn(2+) as a cofactor.

It localises to the cytoplasm. The enzyme catalyses tRNA(Ala) + L-alanine + ATP = L-alanyl-tRNA(Ala) + AMP + diphosphate. In terms of biological role, catalyzes the attachment of alanine to tRNA(Ala) in a two-step reaction: alanine is first activated by ATP to form Ala-AMP and then transferred to the acceptor end of tRNA(Ala). Also edits incorrectly charged Ser-tRNA(Ala) and Gly-tRNA(Ala) via its editing domain. The polypeptide is Alanine--tRNA ligase (Rhodopseudomonas palustris (strain HaA2)).